Reading from the N-terminus, the 363-residue chain is L-serine dehydratase/L-threonine deaminase (363 aa).

Ala-2 carries the N-acetylalanine modification. Lys-41 carries the N6-(pyridoxal phosphate)lysine modification. The interval 74–98 (RGRSHSGDEQPHVRSQALLPDTPSP) is disordered. Pro-164 contributes to the pyridoxal 5'-phosphate binding site.

This sequence belongs to the serine/threonine dehydratase family. Homodimer. Pyridoxal 5'-phosphate is required as a cofactor. Predominantly expressed in the periportal regions of the liver.

The protein localises to the cytoplasm. It catalyses the reaction L-serine = pyruvate + NH4(+). The catalysed reaction is L-threonine = 2-oxobutanoate + NH4(+). It participates in carbohydrate biosynthesis; gluconeogenesis. Its function is as follows. Catalyzes the pyridoxal-phosphate-dependent dehydrative deamination of L-threonine and L-serine to ammonia and alpha-ketobutyrate and pyruvate, respectively. The protein is L-serine dehydratase/L-threonine deaminase (Sds) of Rattus norvegicus (Rat).